The chain runs to 182 residues: Vacuolar protein sorting-associated protein 29 (182 aa).

Residues D8, H10, and N39 each contribute to the Zn(2+) site. K50 is subject to N6-acetyllysine. 4 residues coordinate Zn(2+): D62, H86, H115, and H117.

The protein belongs to the VPS29 family. As to quaternary structure, component of the commander complex consisting of the CCC subcomplex and the retriever subcomplex. Component of the heterotrimeric retriever complex formed by VPS26C, VPS29 and VPS35L; within the complex interacts with VPS35L. Component of the heterotrimeric retromer cargo-selective complex (CSC), also described as vacuolar protein sorting subcomplex (VPS), formed by VPS26 (VPS26A or VPS26B), VPS29 and VPS35. The CSC has a highly elongated structure with VPS26 and VPS29 binding independently at opposite distal ends of VPS35 as central platform. The CSC is believed to associate with variable sorting nexins to form functionally distinct retromer complex variants. The originally described retromer complex (also called SNX-BAR retromer) is a pentamer containing the CSC and a heterodimeric membrane-deforming subcomplex formed between SNX1 or SNX2 and SNX5 or SNX6 (also called SNX-BAR subcomplex); the respective CSC and SNX-BAR subcomplexes associate with low affinity. The CSC associates with SNX3 to form a SNX3-retromer complex. The CSC associates with SNX27, the WASH complex and the SNX-BAR subcomplex to form the SNX27-retromer complex. Interacts with VPS26A, VPS35, SNX1, SNX2, SNX3, SNX27, WASHC5. Interacts with TBC1D5; this interaction is blocked by VPS35L in the retriever complex. Interacts with SNX17; the interaction is indirect; SNX17 (via its C-terminus) interacts with the retriever complex (via VPS26C and VPS35L). Interacts with VPS26B and ANKRD27. In terms of assembly, (Microbial infection) Interacts with human papillomavirus 16 minor capsid protein L2 (via C-terminus); this interaction mediates the transport of the capsid from the early endosome to the Golgi apparatus. As to expression, ubiquitous. Highly expressed in heart, lung, placenta, spleen, peripheral blood leukocytes, thymus, colon skeletal muscle, kidney and brain.

The protein localises to the cytoplasm. The protein resides in the membrane. Its subcellular location is the endosome membrane. It is found in the early endosome. It localises to the late endosome. In terms of biological role, component of the commander complex that is essential for endosomal recycling of transmembrane cargos; the commander complex is composed of the CCC subcomplex and the retriever subcomplex. Component of the retriever complex, which is a heterotrimeric complex related to retromer cargo-selective complex (CSC) and essential for retromer-independent retrieval and recycling of numerous cargos such as integrin alpha-5/beta-1 (ITGA5:ITGB1). Component of the retromer cargo-selective complex (CSC). The CSC is believed to be the core functional component of retromer or respective retromer complex variants acting to prevent missorting of selected transmembrane cargo proteins into the lysosomal degradation pathway. The recruitment of the CSC to the endosomal membrane involves RAB7A and SNX3. The SNX-BAR retromer mediates retrograde transport of cargo proteins from endosomes to the trans-Golgi network (TGN) and is involved in endosome-to-plasma membrane transport for cargo protein recycling. The SNX3-retromer mediates the retrograde endosome-to-TGN transport of WLS distinct from the SNX-BAR retromer pathway. The SNX27-retromer is believed to be involved in endosome-to-plasma membrane trafficking and recycling of a broad spectrum of cargo proteins. The CSC seems to act as recruitment hub for other proteins, such as the WASH complex and TBC1D5. Required to regulate transcytosis of the polymeric immunoglobulin receptor (pIgR-pIgA). In the endosomes, retriever complex drives the retrieval and recycling of NxxY-motif-containing cargo proteins by coupling to SNX17, a cargo essential for the homeostatic maintenance of numerous cell surface proteins associated with processes that include cell migration, cell adhesion, nutrient supply and cell signaling. The recruitment of the retriever complex to the endosomal membrane involves CCC and WASH complexes. Involved in GLUT1 endosome-to-plasma membrane trafficking; the function is dependent of association with ANKRD27. Its function is as follows. (Microbial infection) The heterotrimeric retromer cargo-selective complex (CSC) mediates the exit of human papillomavirus from the early endosome and the delivery to the Golgi apparatus. In Homo sapiens (Human), this protein is Vacuolar protein sorting-associated protein 29.